We begin with the raw amino-acid sequence, 443 residues long: Pyrrolysine--tRNA ligase (443 aa).

Positions 103 to 177 are disordered; it reads VRKAMPKSVA…PAAPVPTSAP (75 aa). Low complexity predominate over residues 131–177; that stretch reads PAPATPVSAPAQAPAPSTGSASATSASAQRMANSAAAPAAPVPTSAP.

It belongs to the class-II aminoacyl-tRNA synthetase family.

The protein localises to the cytoplasm. The catalysed reaction is tRNA(Pyl) + L-pyrrolysine + ATP = L-pyrrolysyl-tRNA(Pyl) + AMP + diphosphate. In terms of biological role, catalyzes the attachment of pyrrolysine to tRNA(Pyl). Pyrrolysine is a lysine derivative encoded by the termination codon UAG. The polypeptide is Pyrrolysine--tRNA ligase (Methanosarcina acetivorans (strain ATCC 35395 / DSM 2834 / JCM 12185 / C2A)).